A 506-amino-acid chain; its full sequence is ATP synthase subunit alpha, chloroplastic (506 aa).

An ATP-binding site is contributed by 170–177 (GDRQTGKT). Residue T257 is modified to Phosphothreonine.

The protein belongs to the ATPase alpha/beta chains family. In terms of assembly, F-type ATPases have 2 components, CF(1) - the catalytic core - and CF(0) - the membrane proton channel. CF(1) has five subunits: alpha(3), beta(3), gamma(1), delta(1), epsilon(1). CF(0) has four main subunits: a, b, b' and c.

The protein resides in the plastid. Its subcellular location is the chloroplast thylakoid membrane. It carries out the reaction ATP + H2O + 4 H(+)(in) = ADP + phosphate + 5 H(+)(out). Its function is as follows. Produces ATP from ADP in the presence of a proton gradient across the membrane. The alpha chain is a regulatory subunit. This is ATP synthase subunit alpha, chloroplastic from Olimarabidopsis pumila (Dwarf rocket).